The sequence spans 438 residues: ATP-dependent protease ATPase subunit HslU (438 aa).

Residues Ile18, 60–65 (GVGKTE), Asp251, Glu316, and Arg388 each bind ATP.

The protein belongs to the ClpX chaperone family. HslU subfamily. In terms of assembly, a double ring-shaped homohexamer of HslV is capped on each side by a ring-shaped HslU homohexamer. The assembly of the HslU/HslV complex is dependent on binding of ATP.

The protein resides in the cytoplasm. Functionally, ATPase subunit of a proteasome-like degradation complex; this subunit has chaperone activity. The binding of ATP and its subsequent hydrolysis by HslU are essential for unfolding of protein substrates subsequently hydrolyzed by HslV. HslU recognizes the N-terminal part of its protein substrates and unfolds these before they are guided to HslV for hydrolysis. This chain is ATP-dependent protease ATPase subunit HslU, found in Jannaschia sp. (strain CCS1).